We begin with the raw amino-acid sequence, 386 residues long: Prostacyclin receptor (386 aa).

Over 1-16 (MADSCRNLTYVRGSVG) the chain is Extracellular. Disulfide bonds link Cys5–Cys165 and Cys92–Cys170. A glycan (N-linked (GlcNAc...) asparagine) is linked at Asn7. A helical transmembrane segment spans residues 17 to 38 (PATSTLMFVAGVVGNGLALGIL). Topologically, residues 39 to 51 (SARRPARPSAFAV) are cytoplasmic. A helical transmembrane segment spans residues 52–76 (LVTGLAATDLLGTSFLSPAVFVAYA). The Extracellular segment spans residues 77 to 94 (RNSSLLGLARGGPALCDA). Residues 95–115 (FAFAMTFFGLASMLILFAMAV) form a helical membrane-spanning segment. The Cytoplasmic portion of the chain corresponds to 116–134 (ERCLALSHPYLYAQLDGPR). A helical membrane pass occupies residues 135 to 158 (CARLALPAIYAFCVLFCALPLLGL). Residues 159-181 (GQHQQYCPGSWCFLRMRWAQPGG) are Extracellular-facing. A helical transmembrane segment spans residues 182 to 208 (AAFSLAYAGLVALLVAAIFLCNGSVTL). Residues 209–235 (SLCRMYRQQKRHQGSLGPRPRTGEDEV) are Cytoplasmic-facing. The chain crosses the membrane as a helical span at residues 236-260 (DHLILLALMTVVMAVCSLPLTIRCF). Residues 261-274 (TQAVAPDSSSEMGD) are Extracellular-facing. Residues 275 to 295 (LLAFRFYAFNPILDPWVFILF) form a helical membrane-spanning segment. Over 296 to 386 (RKAVFQRLKL…AEASVACSLC (91 aa)) the chain is Cytoplasmic. The disordered stretch occupies residues 322 to 376 (PLSQLASGRRDPRAPSAPVGKEGSCVPLSAWGEGQVEPLPPTQQSSGSAVGTSSK). A compositionally biased stretch (polar residues) spans 363 to 376 (TQQSSGSAVGTSSK). Cys383 is modified (cysteine methyl ester). Cys383 is lipidated: S-farnesyl cysteine. Residues 384-386 (SLC) constitute a propeptide, removed in mature form.

Belongs to the G-protein coupled receptor 1 family. In terms of assembly, interacts (non-isoprenylated C-terminus) with PDZK1. In terms of processing, isoprenylation does not influence ligand binding but is required for efficient coupling to the effectors adenylyl cyclase and phospholipase C.

Its subcellular location is the cell membrane. In terms of biological role, receptor for prostacyclin (prostaglandin I2 or PGI2). The activity of this receptor is mediated by G(s) proteins which activate adenylate cyclase. The chain is Prostacyclin receptor (PTGIR) from Homo sapiens (Human).